The chain runs to 556 residues: 2-succinyl-5-enolpyruvyl-6-hydroxy-3-cyclohexene-1-carboxylate synthase (556 aa).

The protein belongs to the TPP enzyme family. MenD subfamily. Homodimer. Mg(2+) is required as a cofactor. The cofactor is Mn(2+). It depends on thiamine diphosphate as a cofactor.

It carries out the reaction isochorismate + 2-oxoglutarate + H(+) = 5-enolpyruvoyl-6-hydroxy-2-succinyl-cyclohex-3-ene-1-carboxylate + CO2. Its pathway is quinol/quinone metabolism; 1,4-dihydroxy-2-naphthoate biosynthesis; 1,4-dihydroxy-2-naphthoate from chorismate: step 2/7. It functions in the pathway quinol/quinone metabolism; menaquinone biosynthesis. Catalyzes the thiamine diphosphate-dependent decarboxylation of 2-oxoglutarate and the subsequent addition of the resulting succinic semialdehyde-thiamine pyrophosphate anion to isochorismate to yield 2-succinyl-5-enolpyruvyl-6-hydroxy-3-cyclohexene-1-carboxylate (SEPHCHC). In Shigella flexneri serotype 5b (strain 8401), this protein is 2-succinyl-5-enolpyruvyl-6-hydroxy-3-cyclohexene-1-carboxylate synthase.